The following is a 251-amino-acid chain: Uroporphyrinogen-III C-methyltransferase (251 aa).

S-adenosyl-L-homocysteine is bound by residues Pro17, 93 to 95, 123 to 124, Met177, and Ala206; these read GGD and TS.

Belongs to the precorrin methyltransferase family.

It localises to the plastid. Its subcellular location is the chloroplast. It catalyses the reaction uroporphyrinogen III + 2 S-adenosyl-L-methionine = precorrin-2 + 2 S-adenosyl-L-homocysteine + H(+). The protein operates within cofactor biosynthesis; adenosylcobalamin biosynthesis; precorrin-2 from uroporphyrinogen III: step 1/1. It participates in porphyrin-containing compound metabolism; siroheme biosynthesis; precorrin-2 from uroporphyrinogen III: step 1/1. Catalyzes the two successive C-2 and C-7 methylation reactions involved in the conversion of uroporphyrinogen III to precorrin-2 via the intermediate formation of precorrin-1. It is a step in the biosynthesis of both cobalamin (vitamin B12) and siroheme. The chain is Uroporphyrinogen-III C-methyltransferase (cobA) from Cyanidium caldarium (Red alga).